A 607-amino-acid polypeptide reads, in one-letter code: MENQSPHLSLRVPTPTQQNLSFCDATPKDIKYWLAHLPKANLGETARQLYQGLIELNQLVLPVEARLQLLELFRPEVHFVCAHLERHFLNQAIVLDERPRKIANLCQALQNHLAIGYKLIVVQEAPRNSRDRAQLFAVGIQRAIRSLCGPLIRASQLYCPVPEGLWLELHQLYQLASQRGVHRLAVRDELAKHTPGLSVEQAYLIPLLLGCARCNQMRQNNIARLAEVLEPWSQLLSIQSATLPGSLFIAVPQIDGPPRYRSLYPETQLASALGIDTQPLVELIREYLLQPEAERAKARLPLIEGVTLDLLQHLSSAWGDIAERTFQRTQGQGQLTLCIGMSALHYFLAGRRPFNEVLQIQEAPEAPRFKADVQDAWAGAFDAQKVTDWQPGMPLEEIEYRPHQSPRSVQPGHPQAHAQADATEDYPTYALPIVNHSPGGYCLSWPKEVPAQLQAGELVGLQDLPGQAWSIAVVRWIRQVRNGGTQMGIEMIAPAAQPCGLQLLRKTEQSSHYLRALLLPAIAAISRPATVITPRLPFQEGSRVQINLHGEERRAVLNRRQASTGSFSQFEYRSAEPVNTPSDKPVTAPVARPPAGEEDFDSLWKSL.

Residues 323–492 (ERTFQRTQGQ…GGTQMGIEMI (170 aa)) form a pilZ-like domain region. The RXXXR motif motif lies at 324 to 328 (RTFQR). A D/NXSXXG motif motif is present at residues 435–440 (NHSPGG). The segment covering 568 to 582 (SQFEYRSAEPVNTPS) has biased composition (polar residues). Residues 568 to 607 (SQFEYRSAEPVNTPSDKPVTAPVARPPAGEEDFDSLWKSL) are disordered.

In terms of assembly, monomer in the absence of c-di-GMP. Forms dimers in the presence of c-di-GMP.

Its subcellular location is the cytoplasm. High-affinity cyclic-di-GMP binding protein that regulates type IV pili (T4P) elongation. Required for T4P-mediated surface attachment and walking motility during the early phases of surface colonization. Not required for twitching motility. Does not bind related nucleotides such as GMP, GDP, GTP or ATP. The polypeptide is Cyclic-di-GMP receptor FimW (Pseudomonas aeruginosa (strain ATCC 15692 / DSM 22644 / CIP 104116 / JCM 14847 / LMG 12228 / 1C / PRS 101 / PAO1)).